Here is a 317-residue protein sequence, read N- to C-terminus: Protease 7 (317 aa).

A signal peptide spans 1–20; it reads MRAKLLGIVLTTPIAISSFA. The Periplasmic portion of the chain corresponds to 21–31; sequence STETLSFTPDN. The chain crosses the membrane as a beta stranded span at residues 32 to 41; the sequence is INADISLGTL. Residues 42–69 are Extracellular-facing; sequence SGKTKERVYLAEEGGRKVSQLDWKFNNA. A beta stranded membrane pass occupies residues 70–78; sequence AIIKGAINW. Residues 79-83 are Periplasmic-facing; it reads DLMPQ. Residues 84 to 92 traverse the membrane as a beta stranded segment; the sequence is ISIGAAGWT. The Extracellular segment spans residues 93-130; the sequence is TLGSRGGNMVDQDWMDSSNPGTWTDESRHPDTQLNYAN. Catalysis depends on residues aspartate 103 and aspartate 105. A beta stranded membrane pass occupies residues 131 to 140; sequence EFDLNIKGWL. At 141–145 the chain is on the periplasmic side; that stretch reads LNEPN. The chain crosses the membrane as a beta stranded span at residues 146-156; that stretch reads YRLGLMAGYQE. Topologically, residues 157–197 are extracellular; the sequence is SRYSFTARGGSYIYSSEEGFRDDIGSFPNGERAIGYKQRFK. The chain crosses the membrane as a beta stranded span at residues 198–209; it reads MPYIGLTGSYRY. The Periplasmic segment spans residues 210–211; the sequence is ED. A beta stranded membrane pass occupies residues 212 to 221; sequence FELGGTFKYS. Residues 222–250 lie on the Extracellular side of the membrane; that stretch reads GWVESSDNDEHYDPGKRITYRSKVKDQNY. Residues aspartate 230 and histidine 232 contribute to the active site. The beta stranded transmembrane segment at 251 to 261 threads the bilayer; that stretch reads YSVAVNAGYYV. Over 262-264 the chain is Periplasmic; the sequence is TPN. The chain crosses the membrane as a beta stranded span at residues 265 to 274; it reads AKVYVEGAWN. Topologically, residues 275-306 are extracellular; the sequence is RVTNKKGNTSLYDHNNNTSDYSKNGAGIENYN. A beta stranded membrane pass occupies residues 307–316; the sequence is FITTAGLKYT. Phenylalanine 317 is a topological domain (periplasmic).

It belongs to the peptidase A26 family. In terms of assembly, homopentamer.

It localises to the cell outer membrane. The enzyme catalyses Has a virtual requirement for Arg in the P1 position and a slightly less stringent preference for this residue in the P1' position, which can also contain Lys, Gly or Val.. Its activity is regulated as follows. Inhibited by zinc. Its function is as follows. Protease that can cleave T7 RNA polymerase, ferric enterobactin receptor protein (FEP), antimicrobial peptide protamine and other proteins. This protease has a specificity for paired basic residues. This is Protease 7 (ompT) from Escherichia coli (strain K12).